Reading from the N-terminus, the 585-residue chain is Mycosin-5 (585 aa).

An N-terminal signal peptide occupies residues 1-39; it reads MQRFGTGSSRSWCGRAGTATIAAVLLASGALTGLPPAYA. The 439-residue stretch at 83 to 521 folds into the Peptidase S8 domain; sequence PKYMEMLNLN…YGVVDPVAAL (439 aa). Residues aspartate 109 and histidine 141 each act as charge relay system in the active site. Low complexity predominate over residues 163–173; the sequence is VPRRPVTIPTT. Residues 163-269 are disordered; sequence VPRRPVTIPT…PALGPPPDAF (107 aa). Composition is skewed to pro residues over residues 196 to 224 and 252 to 267; these read PAPP…PQPP and NPHP…PPPD. Residue serine 466 is the Charge relay system of the active site. A helical membrane pass occupies residues 552 to 572; the sequence is VPIWVAAGGLAGALLIGGAVF.

The protein belongs to the peptidase S8 family.

Its subcellular location is the cell membrane. In Mycobacterium tuberculosis (strain ATCC 25618 / H37Rv), this protein is Mycosin-5.